A 370-amino-acid chain; its full sequence is Homospermidine synthase (370 aa).

Belongs to the deoxyhypusine synthase family. In terms of assembly, homotetramer. Requires NAD(+) as cofactor.

The catalysed reaction is putrescine + spermidine = sym-homospermidine + propane-1,3-diamine. The protein operates within alkaloid biosynthesis; pyrrolizidine alkaloid biosynthesis. Its function is as follows. Catalyzes the transfer of an aminobutyl unit from spermidine onto putrescine. The resulting polyamine homospermidine is a precursor in the biosynthesis of pyrrolizidine alkaloids. This chain is Homospermidine synthase (HSS1), found in Senecio vulgaris (Common groundsel).